A 59-amino-acid chain; its full sequence is U-limacoditoxin(3)-Dv33 (59 aa).

A signal peptide spans 1–19 (MSKVILLCLIFALFACSIS).

It belongs to the limacoditoxin-3 family. Post-translationally, the natural peptide is not amidated. The recombinant peptide is amidated. As to expression, expressed by the venom secretory cell of the spine. The spine is a cuticular structure containing a single large nucleated venom-secreting cell at its base. It is an independent unit capable of producing, storing and injecting venom. On the back of D.vulnerans caterpillars, spines are grouped together by 50 to 100 to form scoli, of which there are eight in D.vulnerans.

It localises to the secreted. Functionally, probable toxin. Shows a relatively potent antiparasitic activity against the major pathogenic nematode of ruminants (H.contortus, EC(50)=2.6 uM). Does not show insecticidal and antimicrobial activities. Does not induce increase in intracellular calcium in mouse DRG neurons, suggesting that it does not induce pain. This Doratifera vulnerans (Mottled cup moth) protein is U-limacoditoxin(3)-Dv33.